The chain runs to 150 residues: uncharacterized protein (150 aa).

Positions 5–66 constitute an HTH asnC-type domain; that stretch reads LDRTDKMLLE…KPNYKKLNLG (62 aa). Residues 24 to 43 constitute a DNA-binding region (H-T-H motif); sequence IAALSKKLGIPRTTVHYRIK.

This is an uncharacterized protein from Pyrococcus furiosus (strain ATCC 43587 / DSM 3638 / JCM 8422 / Vc1).